We begin with the raw amino-acid sequence, 293 residues long: tRNA-cytidine(32) 2-sulfurtransferase (293 aa).

Residues 62 to 67 (SGGKDS) carry the PP-loop motif motif. 3 residues coordinate [4Fe-4S] cluster: C137, C140, and C228.

The protein belongs to the TtcA family. Homodimer. The cofactor is Mg(2+). [4Fe-4S] cluster is required as a cofactor.

The protein localises to the cytoplasm. It catalyses the reaction cytidine(32) in tRNA + S-sulfanyl-L-cysteinyl-[cysteine desulfurase] + AH2 + ATP = 2-thiocytidine(32) in tRNA + L-cysteinyl-[cysteine desulfurase] + A + AMP + diphosphate + H(+). It participates in tRNA modification. Catalyzes the ATP-dependent 2-thiolation of cytidine in position 32 of tRNA, to form 2-thiocytidine (s(2)C32). The sulfur atoms are provided by the cysteine/cysteine desulfurase (IscS) system. In Brucella melitensis biotype 1 (strain ATCC 23456 / CCUG 17765 / NCTC 10094 / 16M), this protein is tRNA-cytidine(32) 2-sulfurtransferase.